The sequence spans 495 residues: Ectonucleoside triphosphate diphosphohydrolase 8 (495 aa).

At 1–8 (MGLTWKQR) the chain is on the cytoplasmic side. Residues 9-29 (VFTALLGAAAVSGLTALLLVL) traverse the membrane as a helical segment. The Extracellular portion of the chain corresponds to 30 to 466 (VGTMNVLLPP…PAQGWAQSFG (437 aa)). Cysteines 78 and 102 form a disulfide. Glutamate 168 acts as the Proton acceptor in catalysis. The cysteines at positions 246 and 292 are disulfide-linked. Residues asparagine 303 and asparagine 324 are each glycosylated (N-linked (GlcNAc...) asparagine). 2 disulfide bridges follow: cysteine 328–cysteine 334 and cysteine 380–cysteine 403. The chain crosses the membrane as a helical span at residues 467–487 (VWAAGVVFVVLTLAATLGAVA). Residues 488 to 495 (VQVFWLQD) are Cytoplasmic-facing.

The protein belongs to the GDA1/CD39 NTPase family. Ca(2+) is required as a cofactor. Mg(2+) serves as cofactor. N-glycosylated.

It localises to the cell membrane. It catalyses the reaction a ribonucleoside 5'-triphosphate + 2 H2O = a ribonucleoside 5'-phosphate + 2 phosphate + 2 H(+). In terms of biological role, canalicular ectonucleoside NTPDase responsible for the main hepatic NTPDase activity. Ectonucleoside NTPDases catalyze the hydrolysis of gamma- and beta-phosphate residues of nucleotides, playing a central role in concentration of extracellular nucleotides. Has activity toward ATP, ADP, UTP and UDP, but not toward AMP. The polypeptide is Ectonucleoside triphosphate diphosphohydrolase 8 (ENTPD8) (Bos taurus (Bovine)).